The primary structure comprises 210 residues: Na(+)-translocating NADH-quinone reductase subunit D (210 aa).

Helical transmembrane passes span 14–34, 42–62, 72–92, 103–123, 131–151, and 178–198; these read PIVS…ALAV, LVMT…ISML, IIVQ…VLQA, VFVG…AYAM, FMDG…VGFV, and NGLL…IWII.

It belongs to the NqrDE/RnfAE family. As to quaternary structure, composed of six subunits; NqrA, NqrB, NqrC, NqrD, NqrE and NqrF.

The protein localises to the cell inner membrane. The catalysed reaction is a ubiquinone + n Na(+)(in) + NADH + H(+) = a ubiquinol + n Na(+)(out) + NAD(+). Its function is as follows. NQR complex catalyzes the reduction of ubiquinone-1 to ubiquinol by two successive reactions, coupled with the transport of Na(+) ions from the cytoplasm to the periplasm. NqrA to NqrE are probably involved in the second step, the conversion of ubisemiquinone to ubiquinol. The chain is Na(+)-translocating NADH-quinone reductase subunit D from Shewanella woodyi (strain ATCC 51908 / MS32).